The sequence spans 49 residues: Glycolactin (49 aa).

This sequence belongs to the pancreatic ribonuclease family. Glycosylated. In terms of tissue distribution, milk.

The protein resides in the secreted. Its function is as follows. Manifests poly C-specific RNase activity toward yeast tRNA, elicits a dose-dependent inhibition of cell-free translation, inhibits formation of superoxide ions in vitro and inhibits the hemagglutinating activities of soybean lectin and Ricinus communis agglutinin 120. Inhibits HIV-1 reverse transcriptase. The sequence is that of Glycolactin from Bos taurus (Bovine).